Here is a 145-residue protein sequence, read N- to C-terminus: Anaerobic nitrite reductase NSHB5 (145 aa).

Residues 2–142 form the Globin domain; sequence GFSETQEELV…LAAAIKEEMK (141 aa). The short motif at 35 to 39 is the Homodimerization element; sequence EIAPA. Residues Ser-45, His-59, Lys-61, Arg-84, Thr-88, and His-89 each coordinate heme b. Residues 96-108 carry the Homodimerization motif; sequence DAYFEVVKTALLD.

It belongs to the plant globin family. As to quaternary structure, homodimer. It depends on heme b as a cofactor. In terms of tissue distribution, expressed in embryonic (embryos, coleoptiles and seminal roots) and vegetative (leaves and roots) organs.

It localises to the cytoplasm. The protein resides in the nucleus. It carries out the reaction Fe(III)-heme b-[protein] + nitric oxide + H2O = Fe(II)-heme b-[protein] + nitrite + 2 H(+). Functionally, phytoglobin that reduces nitrite to nitric oxide under anoxic conditions (e.g. during flooding or in waterlogged soil). May not function as an oxygen storage or transport protein. Has an unusually high affinity for O(2) through an hexacoordinate heme iron because of a very low dissociation constant. In Oryza sativa subsp. japonica (Rice), this protein is Anaerobic nitrite reductase NSHB5.